Consider the following 449-residue polypeptide: Telomere resolvase ResT (449 aa).

The cofactor is No cofactors were found to be necessary..

The protein localises to the cytoplasm. Its subcellular location is the nucleoid. Functionally, catalyzes the conservative, sequence-specific DNA breakage and reunion reaction that generates two hairpin telomeres from a replicated telomere substrate. Breaks two phosphodiester bonds in a single DNA duplex and joins each end with the opposite DNA strand to form covalently closed hairpin telomeres. In vitro relaxed-circular, open-circular and linearized plasmids, but not supercoiled DNA, are all substrates. Cleavage is position-dependent relative to conserved sequence elements. This Borreliella burgdorferi (strain ATCC 35210 / DSM 4680 / CIP 102532 / B31) (Borrelia burgdorferi) protein is Telomere resolvase ResT.